The primary structure comprises 472 residues: Siroheme synthase (472 aa).

Positions 1-207 (MNFLPIFLDI…GKDQAAKAWL (207 aa)) are precorrin-2 dehydrogenase /sirohydrochlorin ferrochelatase. NAD(+) contacts are provided by residues 22–23 (EV) and 43–44 (PR). Ser132 bears the Phosphoserine mark. Residues 221 to 472 (GEVYLVGAGP…QPEGNLPGAE (252 aa)) form a uroporphyrinogen-III C-methyltransferase region. Pro230 is an S-adenosyl-L-methionine binding site. Catalysis depends on Asp253, which acts as the Proton acceptor. Residue Lys275 is the Proton donor of the active site. S-adenosyl-L-methionine contacts are provided by residues 306 to 308 (GGD), Ile311, 336 to 337 (TA), Met388, and Gly417.

This sequence in the N-terminal section; belongs to the precorrin-2 dehydrogenase / sirohydrochlorin ferrochelatase family. The protein in the C-terminal section; belongs to the precorrin methyltransferase family.

It catalyses the reaction uroporphyrinogen III + 2 S-adenosyl-L-methionine = precorrin-2 + 2 S-adenosyl-L-homocysteine + H(+). The catalysed reaction is precorrin-2 + NAD(+) = sirohydrochlorin + NADH + 2 H(+). It carries out the reaction siroheme + 2 H(+) = sirohydrochlorin + Fe(2+). It participates in cofactor biosynthesis; adenosylcobalamin biosynthesis; precorrin-2 from uroporphyrinogen III: step 1/1. It functions in the pathway cofactor biosynthesis; adenosylcobalamin biosynthesis; sirohydrochlorin from precorrin-2: step 1/1. Its pathway is porphyrin-containing compound metabolism; siroheme biosynthesis; precorrin-2 from uroporphyrinogen III: step 1/1. The protein operates within porphyrin-containing compound metabolism; siroheme biosynthesis; siroheme from sirohydrochlorin: step 1/1. It participates in porphyrin-containing compound metabolism; siroheme biosynthesis; sirohydrochlorin from precorrin-2: step 1/1. Functionally, multifunctional enzyme that catalyzes the SAM-dependent methylations of uroporphyrinogen III at position C-2 and C-7 to form precorrin-2 via precorrin-1. Then it catalyzes the NAD-dependent ring dehydrogenation of precorrin-2 to yield sirohydrochlorin. Finally, it catalyzes the ferrochelation of sirohydrochlorin to yield siroheme. The sequence is that of Siroheme synthase from Nitrosospira multiformis (strain ATCC 25196 / NCIMB 11849 / C 71).